The following is a 320-amino-acid chain: Ribose-phosphate pyrophosphokinase 3 (320 aa).

Asp-131, His-133, Asp-142, and Asp-146 together coordinate Mg(2+).

Belongs to the ribose-phosphate pyrophosphokinase family.

Its subcellular location is the cytoplasm. It carries out the reaction D-ribose 5-phosphate + ATP = 5-phospho-alpha-D-ribose 1-diphosphate + AMP + H(+). The protein operates within metabolic intermediate biosynthesis; 5-phospho-alpha-D-ribose 1-diphosphate biosynthesis; 5-phospho-alpha-D-ribose 1-diphosphate from D-ribose 5-phosphate (route I): step 1/1. Functionally, 5-phosphoribose 1-diphosphate synthase involved in nucleotide, histidine, and tryptophan biosynthesis. Active in heteromultimeric complexes with other 5-phosphoribose 1-diphosphate synthases (PRS2, PRS3, PRS4 and PRS5). This is Ribose-phosphate pyrophosphokinase 3 (PRS3) from Saccharomyces cerevisiae (strain ATCC 204508 / S288c) (Baker's yeast).